Reading from the N-terminus, the 510-residue chain is MGACDNDFIELHSRVTADVWLARPWQCLHRTRALGTTATLAPKTLKPFEAIPQYSRNKWLKMIQILREQGQENLHLEMHQAFQELGPIFRHSAGGAQIVSVMLPEDAEKLHQVESILPRRMHLEPWVAHRELRGLRRGVFLLNGAEWRFNRLKLNPNVLSPKAVQNFVPMVDEVARDFLEALKKKVRQNARGSLTMDVQQSLFNYTIEASNFALFGERLGLLGHDLNPGSLKFIHALHSMFKSTTQLLFLPRSLTRWTSTQVWKEHFDAWDVISEYANRCIWKVHQELRLGSSQTYSGIVAALITQGALPLDAIKANSMELTAGSVDTTAIPLVMTLFELARNPDVQQALRQETLAAEASIAANPQKAMSDLPLLRAALKETLRLYPVGGFLERILNSDLVLQNYHVPAGTLVLLYLYSMGRNPAVFPRPERYMPQRWLERKRSFQHLAFGFGVRQCLGRRLAEVEMLLLLHHMLKTFQVETLRQEDVQMAYRFVLMPSSSPVLTFRPIS.

The N-terminal 34 residues, 1-34 (MGACDNDFIELHSRVTADVWLARPWQCLHRTRAL), are a transit peptide targeting the mitochondrion. Phenylalanine 391 is a binding site for 21-hydroxyprogesterone. Cysteine 457 is a binding site for heme.

It belongs to the cytochrome P450 family. It depends on heme as a cofactor. As to expression, adrenal cortex.

It localises to the mitochondrion inner membrane. The enzyme catalyses a steroid + 2 reduced [adrenodoxin] + O2 + 2 H(+) = an 11beta-hydroxysteroid + 2 oxidized [adrenodoxin] + H2O. It carries out the reaction 21-hydroxyprogesterone + 2 reduced [adrenodoxin] + O2 + 2 H(+) = corticosterone + 2 oxidized [adrenodoxin] + H2O. It catalyses the reaction corticosterone + 2 reduced [adrenodoxin] + O2 + 2 H(+) = 18-hydroxycorticosterone + 2 oxidized [adrenodoxin] + H2O. The catalysed reaction is 18-hydroxycorticosterone + 2 reduced [adrenodoxin] + O2 + 2 H(+) = aldosterone + 2 oxidized [adrenodoxin] + 2 H2O. The enzyme catalyses 11-deoxycortisol + 2 reduced [adrenodoxin] + O2 + 2 H(+) = cortisol + 2 oxidized [adrenodoxin] + H2O. It carries out the reaction cortisol + 2 reduced [adrenodoxin] + O2 + 2 H(+) = 18-hydroxycortisol + 2 oxidized [adrenodoxin] + H2O. It catalyses the reaction 21-hydroxyprogesterone + 2 reduced [adrenodoxin] + O2 + 2 H(+) = 18-hydroxy-11-deoxycorticosterone + 2 oxidized [adrenodoxin] + H2O. The catalysed reaction is 18-hydroxycortisol + 2 reduced [adrenodoxin] + O2 + 2 H(+) = 18-oxocortisol + 2 oxidized [adrenodoxin] + 2 H2O. It participates in steroid biosynthesis. In terms of biological role, a cytochrome P450 monooxygenase that catalyzes the biosynthesis of aldosterone, the main mineralocorticoid responsible for salt and water homeostasis. Catalyzes three sequential oxidative reactions of 11-deoxycorticosterone (21-hydroxyprogesterone), namely 11-beta hydroxylation, followed by two successive oxidations at C18 yielding 18-hydroxy and then 18-oxo intermediates (that do not leave the enzyme active site during the consecutive hydroxylation reactions), and end with the formation of aldosterone. Can also produce 18-hydroxycortisol and 18-oxocortisol, derived from successive oxidations of cortisol at C18, normally found at very low levels, but significantly increased in primary aldosteronism, the most common form of secondary hypertension. Mechanistically, uses molecular oxygen inserting one oxygen atom into a substrate and reducing the second into a water molecule. Two electrons are provided by NADPH via a two-protein mitochondrial transfer system comprising flavoprotein FDXR (adrenodoxin/ferredoxin reductase) and nonheme iron-sulfur protein FDX1 or FDX2 (adrenodoxin/ferredoxin). Could also be involved in the androgen metabolic pathway. This Rattus norvegicus (Rat) protein is Cytochrome P450 11B2, mitochondrial (Cyp11b2).